A 715-amino-acid polypeptide reads, in one-letter code: Polyribonucleotide nucleotidyltransferase (715 aa).

Residues D488 and D494 each contribute to the Mg(2+) site. In terms of domain architecture, KH spans 555–614; sequence PRIEVMHIPTDKIRDVIGTGGKVIREIVEKTGAKINIEDDGTVKIASSNGKEIEAARKWI. In terms of domain architecture, S1 motif spans 624-692; the sequence is GEIYEGTVVK…ERGKVRLSMK (69 aa).

Belongs to the polyribonucleotide nucleotidyltransferase family. Mg(2+) is required as a cofactor.

Its subcellular location is the cytoplasm. The catalysed reaction is RNA(n+1) + phosphate = RNA(n) + a ribonucleoside 5'-diphosphate. Functionally, involved in mRNA degradation. Catalyzes the phosphorolysis of single-stranded polyribonucleotides processively in the 3'- to 5'-direction. This Chelativorans sp. (strain BNC1) protein is Polyribonucleotide nucleotidyltransferase.